The following is a 245-amino-acid chain: 1-(5-phosphoribosyl)-5-[(5-phosphoribosylamino)methylideneamino] imidazole-4-carboxamide isomerase (245 aa).

Aspartate 7 functions as the Proton acceptor in the catalytic mechanism. The active-site Proton donor is aspartate 129.

The protein belongs to the HisA/HisF family.

It localises to the cytoplasm. The enzyme catalyses 1-(5-phospho-beta-D-ribosyl)-5-[(5-phospho-beta-D-ribosylamino)methylideneamino]imidazole-4-carboxamide = 5-[(5-phospho-1-deoxy-D-ribulos-1-ylimino)methylamino]-1-(5-phospho-beta-D-ribosyl)imidazole-4-carboxamide. It participates in amino-acid biosynthesis; L-histidine biosynthesis; L-histidine from 5-phospho-alpha-D-ribose 1-diphosphate: step 4/9. This Edwardsiella ictaluri (strain 93-146) protein is 1-(5-phosphoribosyl)-5-[(5-phosphoribosylamino)methylideneamino] imidazole-4-carboxamide isomerase.